The sequence spans 68 residues: Palustrin-1c (68 aa).

Residues 1-22 (MFTMKKSLLLLFFLGTISLSLC) form the signal peptide. Residues 23 to 39 (EEERGADEEEGDGEKLT) constitute a propeptide that is removed on maturation. A disulfide bridge links cysteine 62 with cysteine 68.

As to expression, expressed by the skin glands.

It localises to the secreted. Antimicrobial peptide. The chain is Palustrin-1c from Odorrana versabilis (Chinese bamboo leaf odorous frog).